Consider the following 242-residue polypeptide: 4-hydroxy-tetrahydrodipicolinate reductase (242 aa).

Residues 8–13, 75–77, and 99–102 contribute to the NAD(+) site; these read GSNGRM, GTT, and ATNM. His131 (proton donor/acceptor) is an active-site residue. His132 serves as a coordination point for (S)-2,3,4,5-tetrahydrodipicolinate. Lys135 functions as the Proton donor in the catalytic mechanism. 141-142 contacts (S)-2,3,4,5-tetrahydrodipicolinate; the sequence is GT.

The protein belongs to the DapB family.

It is found in the cytoplasm. It catalyses the reaction (S)-2,3,4,5-tetrahydrodipicolinate + NAD(+) + H2O = (2S,4S)-4-hydroxy-2,3,4,5-tetrahydrodipicolinate + NADH + H(+). The enzyme catalyses (S)-2,3,4,5-tetrahydrodipicolinate + NADP(+) + H2O = (2S,4S)-4-hydroxy-2,3,4,5-tetrahydrodipicolinate + NADPH + H(+). It functions in the pathway amino-acid biosynthesis; L-lysine biosynthesis via DAP pathway; (S)-tetrahydrodipicolinate from L-aspartate: step 4/4. Functionally, catalyzes the conversion of 4-hydroxy-tetrahydrodipicolinate (HTPA) to tetrahydrodipicolinate. This is 4-hydroxy-tetrahydrodipicolinate reductase from Campylobacter lari (strain RM2100 / D67 / ATCC BAA-1060).